The chain runs to 102 residues: NADH-quinone oxidoreductase subunit K (102 aa).

3 helical membrane-spanning segments follow: residues 5–25 (IAHY…GIFL), 31–51 (IVIL…FVAF), and 66–86 (FVLT…VVFF).

The protein belongs to the complex I subunit 4L family. As to quaternary structure, NDH-1 is composed of 14 different subunits. Subunits NuoA, H, J, K, L, M, N constitute the membrane sector of the complex.

The protein localises to the cell inner membrane. The catalysed reaction is a quinone + NADH + 5 H(+)(in) = a quinol + NAD(+) + 4 H(+)(out). NDH-1 shuttles electrons from NADH, via FMN and iron-sulfur (Fe-S) centers, to quinones in the respiratory chain. The immediate electron acceptor for the enzyme in this species is believed to be ubiquinone. Couples the redox reaction to proton translocation (for every two electrons transferred, four hydrogen ions are translocated across the cytoplasmic membrane), and thus conserves the redox energy in a proton gradient. The sequence is that of NADH-quinone oxidoreductase subunit K from Brucella abortus (strain S19).